The primary structure comprises 854 residues: Protein asteroid (854 aa).

The interval 368-427 (SEEECSDDEHSSSSDEKFSDVEEGEDQEEADNQDEEQQEENQDVDSGDEEEEEADEGLEL) is disordered. Basic and acidic residues predominate over residues 375-387 (DEHSSSSDEKFSD). The segment covering 388 to 427 (VEEGEDQEEADNQDEEQQEENQDVDSGDEEEEEADEGLEL) has biased composition (acidic residues).

The protein belongs to the asteroid family. Expressed in the proliferative tissues of embryos and in the mitotically active tissue anterior to the morphogenetic furrow in eye imaginal disks.

May function in EGF receptor signaling. May play a role in compound eye morphogenesis. This Drosophila melanogaster (Fruit fly) protein is Protein asteroid (ast).